A 307-amino-acid chain; its full sequence is Protein FAM76A (307 aa).

Disordered stretches follow at residues 161–181 (SRLSSGSHYNSQKTLSTSSIQ) and 287–307 (KQAAALSKGKKPEKSGAITSP). Positions 217 to 297 (IIAQLKEEVA…QAAALSKGKK (81 aa)) form a coiled coil.

The protein belongs to the FAM76 family.

The chain is Protein FAM76A (FAM76A) from Gallus gallus (Chicken).